The following is a 294-amino-acid chain: Shikimate kinase (294 aa).

ATP is bound at residue 87-97; that stretch reads PLAGGLKSSSA.

This sequence belongs to the GHMP kinase family. Archaeal shikimate kinase subfamily.

It localises to the cytoplasm. It carries out the reaction shikimate + ATP = 3-phosphoshikimate + ADP + H(+). It participates in metabolic intermediate biosynthesis; chorismate biosynthesis; chorismate from D-erythrose 4-phosphate and phosphoenolpyruvate: step 5/7. The protein is Shikimate kinase (aroK) of Methanosarcina acetivorans (strain ATCC 35395 / DSM 2834 / JCM 12185 / C2A).